Consider the following 418-residue polypeptide: Glutamyl-tRNA reductase (418 aa).

Substrate is bound by residues 49–52 (TCNR), serine 109, 114–116 (EPQ), and glutamine 120. Cysteine 50 (nucleophile) is an active-site residue. Position 189–194 (189–194 (GAGETI)) interacts with NADP(+).

Belongs to the glutamyl-tRNA reductase family. In terms of assembly, homodimer.

The catalysed reaction is (S)-4-amino-5-oxopentanoate + tRNA(Glu) + NADP(+) = L-glutamyl-tRNA(Glu) + NADPH + H(+). The protein operates within porphyrin-containing compound metabolism; protoporphyrin-IX biosynthesis; 5-aminolevulinate from L-glutamyl-tRNA(Glu): step 1/2. Catalyzes the NADPH-dependent reduction of glutamyl-tRNA(Glu) to glutamate 1-semialdehyde (GSA). In Klebsiella pneumoniae subsp. pneumoniae (strain ATCC 700721 / MGH 78578), this protein is Glutamyl-tRNA reductase.